The primary structure comprises 323 residues: L-lactate dehydrogenase (323 aa).

Positions 11, 32, and 63 each coordinate NAD(+). Substrate-binding residues include Q80 and R86. NAD(+) is bound by residues S99, 116-118 (VSN), and S141. Substrate is bound at residue 118–121 (NPVD). 146-149 (DTAR) is a binding site for substrate. R151 and H166 together coordinate beta-D-fructose 1,6-bisphosphate. Residue H173 is the Proton acceptor of the active site. Residue Y221 is modified to Phosphotyrosine. T230 contacts substrate.

Belongs to the LDH/MDH superfamily. LDH family. As to quaternary structure, homotetramer.

Its subcellular location is the cytoplasm. It carries out the reaction (S)-lactate + NAD(+) = pyruvate + NADH + H(+). Its pathway is fermentation; pyruvate fermentation to lactate; (S)-lactate from pyruvate: step 1/1. With respect to regulation, allosterically activated by fructose 1,6-bisphosphate (FBP). Its function is as follows. Catalyzes the conversion of lactate to pyruvate. The protein is L-lactate dehydrogenase of Kosmotoga olearia (strain ATCC BAA-1733 / DSM 21960 / TBF 19.5.1).